Here is an 88-residue protein sequence, read N- to C-terminus: MANIKSKIKNISRIETARVKNAAIKSRVKKAIRKAREAILENSPKAQELVNKAHHEIGKAVSKGVMHLNKGARKSSRLDLFYNKTKTQ.

This sequence belongs to the bacterial ribosomal protein bS20 family.

In terms of biological role, binds directly to 16S ribosomal RNA. This chain is Small ribosomal subunit protein bS20, found in Mycoplasmopsis synoviae (strain 53) (Mycoplasma synoviae).